The primary structure comprises 882 residues: MTLPSDFPLEPPATNKDPHRDYRGLDRSKLTPMYQHYVEVKETYPNALLLYRVGDFFECFFQDAVIISRELELVLTSKEGGKGIGRVAMTGVPHHALERYSRLLVEKGYAVAICDQVEDSTEAAAEKRLVERAITKLLTPGTLTDEGMLNAKKNNFLAAVVITGENWGLAYSDISTGEFYTTQASDLTALSLELSRLQPSEILFPINAPDLNRILRPGEKSDHLPPCLPDSFCYSLRPQTIFTLTEAKNRLLITYKMRSLEGMGCEHLPLAIRAAGGLLEYIEDTQKANQVPLQPLKTYSISEFLILDGQTRRNLEITQTVRDGSFYGSLLWAIDRTCTAMGSRALRRWLLQPLLDSRGIRARQDTIQELKDNPALRQDIRQKLREIYDIERLSGRVGAGTANARDLLSLAASLVKLADLAALVASGNSPYLKALQQIPADLEKLGQQVIAHLVESPPLHLKEGGVIREGIDAQLDALRRDYQEVIDWFKNLETTEKERTGISNLKVSYNKTFGYYISLPRSKADFAPKDYVRKQTLVNEERYITTELKEKENIILTAVDELNKLEYEIFSDLRRQVAEFSPEIREVATKVAALDVLAALAEIAVYQGYCRPEIADGRLIDIKDGRHPVVEQSLGAGFFVPNSINLGNQEGLEYPDLIILTGPNASGKSCYLRQVGLIQLLAQTGSFVPAKSAKISICDRIFTRVGAVDDLATGQSTFMVEMNETANILNHATDRSLVLLDEIGRGTATFDGLSIAWSVAEYLATVLQSRTIFATHYHELNELASILENVANYQVTVKELPHEIVFLHQVRPGGADKSYGIEAGRLAGLPTSVIDRAMQVMGQIEKHSKIAIGLRQGIKKIKPVKSDNSPSLQQLDIFDDSK.

Residues 1–22 (MTLPSDFPLEPPATNKDPHRDY) are disordered. 662-669 (GPNASGKS) serves as a coordination point for ATP.

This sequence belongs to the DNA mismatch repair MutS family.

Functionally, this protein is involved in the repair of mismatches in DNA. It is possible that it carries out the mismatch recognition step. This protein has a weak ATPase activity. The chain is DNA mismatch repair protein MutS from Microcystis aeruginosa (strain NIES-843 / IAM M-2473).